We begin with the raw amino-acid sequence, 330 residues long: Transcription factor zip1 (330 aa).

Residues 133–148 (SKETQEKTSSQRELFE) are compositionally biased toward basic and acidic residues. Disordered stretches follow at residues 133 to 165 (SKET…SSSS) and 238 to 277 (PSLS…NTAA). Low complexity predominate over residues 150–165 (KSSVASASKDNVSSSS). Polar residues predominate over residues 244 to 262 (KGAQSPNANSKRTKATSAI). The bZIP domain maps to 264–327 (TAAEEDKRRR…NWLKGLIRPT (64 aa)). Residues 270-288 (KRRRNTAASARFRIKKKLK) form a basic motif region. The leucine-zipper stretch occupies residues 292–320 (LERTAKELTEKVAILETRVRELEMENNWL).

It belongs to the bZIP family. In terms of assembly, interacts with pof1.

Its subcellular location is the nucleus. Mediates cell growth arrest in response to cadmium exposure, which is essential to maintain cell viability. Regulates cadmium stress specific genes. In Schizosaccharomyces pombe (strain 972 / ATCC 24843) (Fission yeast), this protein is Transcription factor zip1 (zip1).